A 249-amino-acid polypeptide reads, in one-letter code: tRNA (guanine-N(1)-)-methyltransferase (249 aa).

S-adenosyl-L-methionine-binding positions include G113 and 133–138; that span reads IGDFVV.

It belongs to the RNA methyltransferase TrmD family. Homodimer.

Its subcellular location is the cytoplasm. The enzyme catalyses guanosine(37) in tRNA + S-adenosyl-L-methionine = N(1)-methylguanosine(37) in tRNA + S-adenosyl-L-homocysteine + H(+). In terms of biological role, specifically methylates guanosine-37 in various tRNAs. This is tRNA (guanine-N(1)-)-methyltransferase from Neisseria meningitidis serogroup C / serotype 2a (strain ATCC 700532 / DSM 15464 / FAM18).